Reading from the N-terminus, the 91-residue chain is MKAWHVVLLMCLAVVLGNLPGIIAEASASPLCEYRSAAHIAEHGGKVADDAWHIKHGELPSCDESPKGEARRDNDNRDGGKSRFCRKRWYC.

Residues 58–81 (ELPSCDESPKGEARRDNDNRDGGK) are disordered.

In Mycobacterium phage L5 (Mycobacteriophage L5), this protein is Gene 76 protein (76).